Consider the following 149-residue polypeptide: NADH-quinone oxidoreductase subunit A (149 aa).

3 helical membrane-spanning segments follow: residues 16 to 36, 68 to 88, and 98 to 118; these read FGIF…GAWF, FYLV…LFAW, and LGFI…VYLV.

The protein belongs to the complex I subunit 3 family. NDH-1 is composed of 13 different subunits. Subunits NuoA, H, J, K, L, M, N constitute the membrane sector of the complex.

The protein localises to the cell inner membrane. It catalyses the reaction a quinone + NADH + 5 H(+)(in) = a quinol + NAD(+) + 4 H(+)(out). Its function is as follows. NDH-1 shuttles electrons from NADH, via FMN and iron-sulfur (Fe-S) centers, to quinones in the respiratory chain. The immediate electron acceptor for the enzyme in this species is believed to be ubiquinone. Couples the redox reaction to proton translocation (for every two electrons transferred, four hydrogen ions are translocated across the cytoplasmic membrane), and thus conserves the redox energy in a proton gradient. The chain is NADH-quinone oxidoreductase subunit A from Cronobacter sakazakii (strain ATCC BAA-894) (Enterobacter sakazakii).